We begin with the raw amino-acid sequence, 196 residues long: Glycerol-3-phosphate acyltransferase (196 aa).

The next 5 helical transmembrane spans lie at 1-21 (MGFI…SILF), 53-73 (KYGA…AILD), 76-96 (YIDP…IGHI), 115-135 (VVFG…AFVF), and 141-161 (VSLA…EGDF).

The protein belongs to the PlsY family. As to quaternary structure, probably interacts with PlsX.

Its subcellular location is the cell inner membrane. The catalysed reaction is an acyl phosphate + sn-glycerol 3-phosphate = a 1-acyl-sn-glycero-3-phosphate + phosphate. It functions in the pathway lipid metabolism; phospholipid metabolism. Catalyzes the transfer of an acyl group from acyl-phosphate (acyl-PO(4)) to glycerol-3-phosphate (G3P) to form lysophosphatidic acid (LPA). This enzyme utilizes acyl-phosphate as fatty acyl donor, but not acyl-CoA or acyl-ACP. This Hydrogenobaculum sp. (strain Y04AAS1) protein is Glycerol-3-phosphate acyltransferase.